We begin with the raw amino-acid sequence, 195 residues long: MVTGNFNLEKLLKNLKKKTGKKAEILTMNEKVEKEDVVQNEANEQETVTKKNEEGDIVDKKDETPEVEEKIDKPETSTRKLEIHIAFLSEKYEADIGKVISKFEGVKTCKVDVENKKVVITGDFDEEKLWKELEEKMRKRIVKMEKEKKDDEPITKDEENEIDRGVYMNPSSDDEKEMARWMMFSDENPNACSIS.

Disordered regions lie at residues 36-76 (DVVQ…KPET) and 145-172 (EKEKKDDEPITKDEENEIDRGVYMNPSS). Basic and acidic residues-rich tracts occupy residues 47 to 76 (TVTKKNEEGDIVDKKDETPEVEEKIDKPET) and 145 to 157 (EKEKKDDEPITKD). The 72-residue stretch at 78–149 (TRKLEIHIAF…RIVKMEKEKK (72 aa)) folds into the HMA domain. At Cys-192 the chain carries Cysteine methyl ester. A lipid anchor (S-farnesyl cysteine) is attached at Cys-192. The propeptide at 193–195 (SIS) is removed in mature form.

The protein belongs to the HIPP family.

Probable heavy-metal-binding protein. Required for female gametophyte development and function. This Arabidopsis thaliana (Mouse-ear cress) protein is Heavy metal-associated isoprenylated plant protein 18.